The sequence spans 421 residues: 3-alpha-mycarosylerythronolide B desosaminyl transferase (421 aa).

The N-terminal stretch at 1–23 is a signal peptide; it reads MRVVFSSMASKSHLFGLVPLAWA.

It belongs to the glycosyltransferase 28 family. Heterotetramer composed of EryCII and EryCIII.

The enzyme catalyses 3-O-alpha-L-mycarosylerythronolide B + dTDP-alpha-D-desosamine = erythromycin D + dTDP + H(+). It participates in antibiotic biosynthesis; erythromycin biosynthesis. Functionally, catalyzes the conversion of alpha-L-mycarosylerythronolide B into erythromycin D in the erythromycin biosynthesis pathway. The polypeptide is 3-alpha-mycarosylerythronolide B desosaminyl transferase (eryCIII) (Saccharopolyspora erythraea (strain ATCC 11635 / DSM 40517 / JCM 4748 / NBRC 13426 / NCIMB 8594 / NRRL 2338)).